Here is a 311-residue protein sequence, read N- to C-terminus: tRNA-cytidine(32) 2-sulfurtransferase (311 aa).

A PP-loop motif motif is present at residues 47–52 (SGGKDS). [4Fe-4S] cluster-binding residues include Cys-122, Cys-125, and Cys-213.

Belongs to the TtcA family. Homodimer. Mg(2+) is required as a cofactor. Requires [4Fe-4S] cluster as cofactor.

Its subcellular location is the cytoplasm. It catalyses the reaction cytidine(32) in tRNA + S-sulfanyl-L-cysteinyl-[cysteine desulfurase] + AH2 + ATP = 2-thiocytidine(32) in tRNA + L-cysteinyl-[cysteine desulfurase] + A + AMP + diphosphate + H(+). It participates in tRNA modification. Catalyzes the ATP-dependent 2-thiolation of cytidine in position 32 of tRNA, to form 2-thiocytidine (s(2)C32). The sulfur atoms are provided by the cysteine/cysteine desulfurase (IscS) system. This is tRNA-cytidine(32) 2-sulfurtransferase from Citrobacter koseri (strain ATCC BAA-895 / CDC 4225-83 / SGSC4696).